Consider the following 429-residue polypeptide: 4-hydroxy-3-methylbut-2-en-1-yl diphosphate synthase (flavodoxin) (429 aa).

The [4Fe-4S] cluster site is built by cysteine 310, cysteine 313, cysteine 356, and glutamate 363.

The protein belongs to the IspG family. [4Fe-4S] cluster serves as cofactor.

The catalysed reaction is (2E)-4-hydroxy-3-methylbut-2-enyl diphosphate + oxidized [flavodoxin] + H2O + 2 H(+) = 2-C-methyl-D-erythritol 2,4-cyclic diphosphate + reduced [flavodoxin]. It functions in the pathway isoprenoid biosynthesis; isopentenyl diphosphate biosynthesis via DXP pathway; isopentenyl diphosphate from 1-deoxy-D-xylulose 5-phosphate: step 5/6. Functionally, converts 2C-methyl-D-erythritol 2,4-cyclodiphosphate (ME-2,4cPP) into 1-hydroxy-2-methyl-2-(E)-butenyl 4-diphosphate. The polypeptide is 4-hydroxy-3-methylbut-2-en-1-yl diphosphate synthase (flavodoxin) (Bradyrhizobium sp. (strain BTAi1 / ATCC BAA-1182)).